The following is a 454-amino-acid chain: MNIKIPRIVIGGTGSGVGKTTIALALTQILRKKGLKVATFKCGPDYLDPTYHSRASQKICHNLDGWLMGKESVLNTFYQACHNVDIVIIEGMMGLFDGHSPNSEIGSTAEIAKWLASPVLVVLDTRGMARTVSAILKGLKIFDPDLNLAGAFANFTGSPSHIQLLKDASTEVPILGGLCKHSEQTFPERHLGLYSASEENVSEEKFNFWGEEGEKSLEVNSILEIANSAPEISIPVSNINTTLKRCKIGIAMDSAFHFYYEENLMRLRQAGAELVFFSPLSDSKLTDVDGLYFGGGYPEVFAPTLSKNKSLLNYIQDLSYKNIPIYAECGGLMYLSKGIKLVEGEFFPMLGLISATSIMEKKLKALGYVEVTTKKETIFGEVGLRFRGHQFRYSDLELDESNPIELVYNLRKRKSDQVSEEGYSKNSILASYIHAHWASNPNLAEGFVQSCLRK.

The 196-residue stretch at 247–442 (KIGIAMDSAF…IHAHWASNPN (196 aa)) folds into the GATase cobBQ-type domain. The Nucleophile role is filled by Cys329.

The protein belongs to the CobB/CbiA family. The cofactor is Mg(2+).

It carries out the reaction cob(II)yrinate + 2 L-glutamine + 2 ATP + 2 H2O = cob(II)yrinate a,c diamide + 2 L-glutamate + 2 ADP + 2 phosphate + 2 H(+). It participates in cofactor biosynthesis; adenosylcobalamin biosynthesis; cob(II)yrinate a,c-diamide from sirohydrochlorin (anaerobic route): step 10/10. Its function is as follows. Catalyzes the ATP-dependent amidation of the two carboxylate groups at positions a and c of cobyrinate, using either L-glutamine or ammonia as the nitrogen source. The sequence is that of Cobyrinate a,c-diamide synthase from Leptospira interrogans serogroup Icterohaemorrhagiae serovar Lai (strain 56601).